Reading from the N-terminus, the 397-residue chain is Succinyl-diaminopimelate desuccinylase (397 aa).

Residue His-73 participates in Zn(2+) binding. Asp-75 is an active-site residue. Residue Asp-106 coordinates Zn(2+). Residue Glu-140 is the Proton acceptor of the active site. Zn(2+) is bound by residues Glu-141, Glu-169, and His-366.

The protein belongs to the peptidase M20A family. DapE subfamily. As to quaternary structure, homodimer. Requires Zn(2+) as cofactor. The cofactor is Co(2+).

The enzyme catalyses N-succinyl-(2S,6S)-2,6-diaminopimelate + H2O = (2S,6S)-2,6-diaminopimelate + succinate. It functions in the pathway amino-acid biosynthesis; L-lysine biosynthesis via DAP pathway; LL-2,6-diaminopimelate from (S)-tetrahydrodipicolinate (succinylase route): step 3/3. Functionally, catalyzes the hydrolysis of N-succinyl-L,L-diaminopimelic acid (SDAP), forming succinate and LL-2,6-diaminopimelate (DAP), an intermediate involved in the bacterial biosynthesis of lysine and meso-diaminopimelic acid, an essential component of bacterial cell walls. This Rhizobium rhizogenes (strain K84 / ATCC BAA-868) (Agrobacterium radiobacter) protein is Succinyl-diaminopimelate desuccinylase.